We begin with the raw amino-acid sequence, 146 residues long: Hemoglobin subunit beta (146 aa).

V1 carries the N-acetylvaline modification. Residues 2–146 (HLSADEKNAL…VANALAHKYH (145 aa)) enclose the Globin domain. At S44 the chain carries Phosphoserine. K59 is modified (N6-acetyllysine). Residue H63 coordinates heme b. At K82 the chain carries N6-acetyllysine. H92 contributes to the heme b binding site. C93 is modified (S-nitrosocysteine). The residue at position 144 (K144) is an N6-acetyllysine.

This sequence belongs to the globin family. As to quaternary structure, heterotetramer of two alpha chains and two beta chains. As to expression, red blood cells.

Involved in oxygen transport from the lung to the various peripheral tissues. This is Hemoglobin subunit beta from Sciurus carolinensis (Eastern gray squirrel).